A 246-amino-acid polypeptide reads, in one-letter code: Probable transcriptional regulatory protein YebC (246 aa).

A disordered region spans residues 1–20; that stretch reads MAGHSKWANTRHRKAAQDAK.

The protein belongs to the TACO1 family.

Its subcellular location is the cytoplasm. The sequence is that of Probable transcriptional regulatory protein YebC from Shigella flexneri.